Consider the following 72-residue polypeptide: Cytochrome c oxidase subunit 8C, mitochondrial (72 aa).

Residues Met-1–Ser-29 constitute a mitochondrion transit peptide. The Mitochondrial matrix segment spans residues His-30–Ser-40. The helical transmembrane segment at Pro-41–Ser-64 threads the bilayer. At Ser-65–Glu-72 the chain is on the mitochondrial intermembrane side.

The protein belongs to the cytochrome c oxidase VIII family. Component of the cytochrome c oxidase (complex IV, CIV), a multisubunit enzyme composed of 14 subunits. The complex is composed of a catalytic core of 3 subunits MT-CO1, MT-CO2 and MT-CO3, encoded in the mitochondrial DNA, and 11 supernumerary subunits COX4I, COX5A, COX5B, COX6A, COX6B, COX6C, COX7A, COX7B, COX7C, COX8 and NDUFA4, which are encoded in the nuclear genome. The complex exists as a monomer or a dimer and forms supercomplexes (SCs) in the inner mitochondrial membrane with NADH-ubiquinone oxidoreductase (complex I, CI) and ubiquinol-cytochrome c oxidoreductase (cytochrome b-c1 complex, complex III, CIII), resulting in different assemblies (supercomplex SCI(1)III(2)IV(1) and megacomplex MCI(2)III(2)IV(2)).

Its subcellular location is the mitochondrion inner membrane. It participates in energy metabolism; oxidative phosphorylation. In terms of biological role, component of the cytochrome c oxidase, the last enzyme in the mitochondrial electron transport chain which drives oxidative phosphorylation. The respiratory chain contains 3 multisubunit complexes succinate dehydrogenase (complex II, CII), ubiquinol-cytochrome c oxidoreductase (cytochrome b-c1 complex, complex III, CIII) and cytochrome c oxidase (complex IV, CIV), that cooperate to transfer electrons derived from NADH and succinate to molecular oxygen, creating an electrochemical gradient over the inner membrane that drives transmembrane transport and the ATP synthase. Cytochrome c oxidase is the component of the respiratory chain that catalyzes the reduction of oxygen to water. Electrons originating from reduced cytochrome c in the intermembrane space (IMS) are transferred via the dinuclear copper A center (CU(A)) of subunit 2 and heme A of subunit 1 to the active site in subunit 1, a binuclear center (BNC) formed by heme A3 and copper B (CU(B)). The BNC reduces molecular oxygen to 2 water molecules using 4 electrons from cytochrome c in the IMS and 4 protons from the mitochondrial matrix. This is Cytochrome c oxidase subunit 8C, mitochondrial (Cox8c) from Mus musculus (Mouse).